The sequence spans 385 residues: 1-deoxy-D-xylulose 5-phosphate reductoisomerase (385 aa).

The NADPH site is built by Thr-10, Gly-11, Ser-12, Ile-13, Lys-37, and Asn-124. Lys-125 provides a ligand contact to 1-deoxy-D-xylulose 5-phosphate. NADPH is bound at residue Glu-126. Residue Asp-150 coordinates Mn(2+). 1-deoxy-D-xylulose 5-phosphate contacts are provided by Ser-151, Glu-152, Ser-176, and His-199. Glu-152 serves as a coordination point for Mn(2+). An NADPH-binding site is contributed by Gly-205. Residues Ser-212, Asn-217, Lys-218, and Glu-221 each coordinate 1-deoxy-D-xylulose 5-phosphate. Glu-221 contributes to the Mn(2+) binding site.

It belongs to the DXR family. Mg(2+) serves as cofactor. The cofactor is Mn(2+).

The catalysed reaction is 2-C-methyl-D-erythritol 4-phosphate + NADP(+) = 1-deoxy-D-xylulose 5-phosphate + NADPH + H(+). Its pathway is isoprenoid biosynthesis; isopentenyl diphosphate biosynthesis via DXP pathway; isopentenyl diphosphate from 1-deoxy-D-xylulose 5-phosphate: step 1/6. Catalyzes the NADPH-dependent rearrangement and reduction of 1-deoxy-D-xylulose-5-phosphate (DXP) to 2-C-methyl-D-erythritol 4-phosphate (MEP). The chain is 1-deoxy-D-xylulose 5-phosphate reductoisomerase from Clostridium botulinum (strain Okra / Type B1).